Here is a 1555-residue protein sequence, read N- to C-terminus: Probable serine/threonine-protein kinase DDB_G0276181 (1555 aa).

5 disordered regions span residues 1–54 (MTSV…NNSF), 138–208 (IIQQ…NSKL), 342–452 (KLKK…DSPF), 486–508 (TTTT…IKPL), and 781–850 (NNIN…NQNT). Composition is skewed to low complexity over residues 14 to 53 (NNSG…NNNS), 138 to 205 (IIQQ…NNNN), 359 to 378 (SNIA…KING), and 395 to 431 (NNSQ…SKKP). In terms of domain architecture, PH spans 58–238 (QVLHTGYLTK…WIEMIKLAIS (181 aa)). Polar residues predominate over residues 437-452 (RNISTSDNGSGTDSPF). Composition is skewed to low complexity over residues 486–504 (TTTT…TNTN) and 781–832 (NNIN…NNNN). Over residues 833-850 (GSGLLSSSPLITISNQNT) the composition is skewed to polar residues. The Protein kinase domain maps to 986–1309 (VVLHERLGTG…TIIHSISKMI (324 aa)). 992–1000 (LGTGATGDI) is a binding site for ATP. The segment at 1012-1031 (RHISNQDSSGSNSSGSGSGH) is disordered. ATP is bound at residue K1061. The Proton acceptor role is filled by D1156. Positions 1340–1376 (VQNNNNNSNNNNNNNNNNNNNNSNSNLNNCNNSSPNL) are enriched in low complexity. 2 disordered regions span residues 1340–1383 (VQNN…SANN) and 1457–1480 (KKSS…GSSR).

Belongs to the protein kinase superfamily. TKL Ser/Thr protein kinase family.

The catalysed reaction is L-seryl-[protein] + ATP = O-phospho-L-seryl-[protein] + ADP + H(+). It catalyses the reaction L-threonyl-[protein] + ATP = O-phospho-L-threonyl-[protein] + ADP + H(+). This Dictyostelium discoideum (Social amoeba) protein is Probable serine/threonine-protein kinase DDB_G0276181.